The primary structure comprises 690 residues: Glycine--tRNA ligase beta subunit (690 aa).

It belongs to the class-II aminoacyl-tRNA synthetase family. Tetramer of two alpha and two beta subunits.

The protein resides in the cytoplasm. It catalyses the reaction tRNA(Gly) + glycine + ATP = glycyl-tRNA(Gly) + AMP + diphosphate. This is Glycine--tRNA ligase beta subunit from Lactobacillus gasseri (strain ATCC 33323 / DSM 20243 / BCRC 14619 / CIP 102991 / JCM 1131 / KCTC 3163 / NCIMB 11718 / NCTC 13722 / AM63).